Consider the following 359-residue polypeptide: Type-1 angiotensin II receptor (359 aa).

Residues 1–25 (MILNSSTEDGIKRIQDDCPKAGRHN) lie on the Extracellular side of the membrane. N4 is a glycosylation site (N-linked (GlcNAc...) asparagine). Angiotensin II contacts are provided by Q15 and D17. 2 disulfide bridges follow: C18–C274 and C101–C180. Residues 26–55 (YIFIMIPTLYSIIFVVGIFGNSLVVIVIYF) traverse the membrane as a helical segment. At 56–61 (YMKLKT) the chain is on the cytoplasmic side. A helical transmembrane segment spans residues 62–89 (VASVFLLNLALADLCFLLTLPLWAVYTA). Residues 90 to 98 (MEYRWPFGN) are Extracellular-facing. The chain crosses the membrane as a helical span at residues 99–125 (YLCKIASASVSFNLYASVFLLTCLSID). The Cytoplasmic portion of the chain corresponds to 126–141 (RYLAIVHPMKSRLRRT). The chain crosses the membrane as a helical span at residues 142–165 (MLVAKVTCIIIWLLAGLASLPTII). Over 166-190 (HRNVFFIENTNITVCAFHYESQNST) the chain is Extracellular. Residue R167 participates in angiotensin II binding. N-linked (GlcNAc...) asparagine glycosylation is present at N176. The angiotensin II site is built by F182, H183, and Y184. N188 carries an N-linked (GlcNAc...) asparagine glycan. Residues 191 to 216 (LPVGLGLTKNILGFLFPFLIILTSYT) form a helical membrane-spanning segment. K199 contacts angiotensin II. Topologically, residues 217–239 (LIWKTLKKAYEIQKNKPRKDDIF) are cytoplasmic. Residues 240-268 (KIILAIVLFFFFSWVPHQIFTFMDVLIQL) form a helical membrane-spanning segment. The Extracellular portion of the chain corresponds to 269–278 (GLIRDCKIED). The helical transmembrane segment at 279–304 (IVDTAMPITICLAYFNNCLNPLFYGF) threads the bilayer. At 305–359 (LGKKFKKYFLQLLKYIPPKAKSHSNLSTKMSTLSYRPSENGNSSTKKPAPCIEVE) the chain is on the cytoplasmic side. Residues 336–350 (TLSYRPSENGNSSTK) show a composition bias toward polar residues. Residues 336 to 359 (TLSYRPSENGNSSTKKPAPCIEVE) form a disordered region. The S-palmitoyl cysteine moiety is linked to residue C355.

Belongs to the G-protein coupled receptor 1 family. As to quaternary structure, interacts with MAS1. Interacts with ARRB1. Interacts with FLNA (via filamin repeat 21); increases PKA-mediated phosphorylation of FLNA. C-terminal Ser or Thr residues may be phosphorylated. Adrenal medulla, cortex and kidney.

The protein resides in the cell membrane. Receptor for angiotensin II, a vasoconstricting peptide, which acts as a key regulator of blood pressure and sodium retention by the kidney. The activated receptor in turn couples to G-alpha proteins G(q) (GNAQ, GNA11, GNA14 or GNA15) and thus activates phospholipase C and increases the cytosolic Ca(2+) concentrations, which in turn triggers cellular responses such as stimulation of protein kinase C. The chain is Type-1 angiotensin II receptor (AGTR1) from Bos taurus (Bovine).